Here is a 375-residue protein sequence, read N- to C-terminus: Chanoclavine-I aldehyde reductase ifgG (375 aa).

Residues 31–33 (PTT), Ala66, Gln108, and His176 contribute to the FMN site. The substrate site is built by His176 and Asn179. Tyr181 functions as the Proton donor in the catalytic mechanism. Residues Lys228, Gly300, 325–326 (GR), and Arg326 each bind FMN. Tyr353 provides a ligand contact to substrate.

Belongs to the NADH:flavin oxidoreductase/NADH oxidase family. FMN serves as cofactor.

It catalyses the reaction dihydrochanoclavine-I aldehyde + NADP(+) = chanoclavine-I aldehyde + NADPH + H(+). The protein operates within alkaloid biosynthesis; ergot alkaloid biosynthesis. Functionally, chanoclavine-I aldehyde reductase; part of the gene cluster that mediates the biosynthesis of isofumigaclavines, fungal ergot alkaloids. The tryptophan dimethylallyltransferase ifgA catalyzes the first step of ergot alkaloid biosynthesis by condensing dimethylallyl diphosphate (DMAP) and tryptophan to form 4-dimethylallyl-L-tryptophan. The second step is catalyzed by the methyltransferase ifgB that methylates 4-dimethylallyl-L-tryptophan in the presence of S-adenosyl-L-methionine, resulting in the formation of N-methyl-dimethylallyl-L-tryptophan. The catalase ifgD and the FAD-dependent oxidoreductase ifgC then transform N-methyl-dimethylallyl-L-tryptophan to chanoclavine-I which is further oxidized by ifgE in the presence of NAD(+), resulting in the formation of chanoclavine-I aldehyde. The chanoclavine-I aldehyde reductases ifgG and/or fgaOx3 reduce chanoclavine-I aldehyde to dihydrochanoclavine-I aldehyde that spontaneously dehydrates to form 6,8-dimethyl-6,7-didehydroergoline. The festuclavine dehydrogenases ifgF1 and/or ifgF2 then catalyze the reduction of 6,8-dimethyl-6,7-didehydroergoline to form festuclavine. Hydrolysis of festuclavine by a yet undetermined cytochrome P450 monooxygenase (called ifgH) then leads to the formation of isofumigaclavine B which is in turn acetylated by ifgI to isofumigaclavine A. Penicillium roqueforti has interestingly at least two sets of genes for the consumption of chanoclavine-I aldehyde on three different loci, the OYEs ifgG/fgaOx3 and the festuclavine synthase homologs ifgF1/ifgF2. The reason for the duplication of these genes is unclear, probably to ensure the conversion of chanoclavine-I aldehyde by differential gene expression under various environmental conditions. The protein is Chanoclavine-I aldehyde reductase ifgG of Penicillium roqueforti (strain FM164).